A 166-amino-acid polypeptide reads, in one-letter code: Large ribosomal subunit protein uL10 (166 aa).

Belongs to the universal ribosomal protein uL10 family. In terms of assembly, part of the ribosomal stalk of the 50S ribosomal subunit. The N-terminus interacts with L11 and the large rRNA to form the base of the stalk. The C-terminus forms an elongated spine to which L12 dimers bind in a sequential fashion forming a multimeric L10(L12)X complex.

Forms part of the ribosomal stalk, playing a central role in the interaction of the ribosome with GTP-bound translation factors. In Lysinibacillus sphaericus (strain C3-41), this protein is Large ribosomal subunit protein uL10.